A 410-amino-acid polypeptide reads, in one-letter code: 2-hydroxy-5-methyl-1-naphthoate 7-hydroxylase (410 aa).

Cys-350 contributes to the heme binding site.

Belongs to the cytochrome P450 family. The cofactor is heme.

The enzyme catalyses 2-hydroxy-5-methyl-1-naphthoate + 2 reduced [2Fe-2S]-[ferredoxin] + O2 + 2 H(+) = 2,7-dihydroxy-5-methyl-1-naphthoate + 2 oxidized [2Fe-2S]-[ferredoxin] + H2O. The protein operates within antibiotic biosynthesis. Its function is as follows. Involved in the biosynthesis of the naphthoic acid (NA) moiety in the chromophore of the enedyine antitumor antibiotic neocarzinostatin (NCS). Catalyzes the hydroxylation at C-7 position of 2-hydroxy-5-methyl-1-naphthoate to yield 2,7-dihydroxy-5-methyl-1-naphthoate. The polypeptide is 2-hydroxy-5-methyl-1-naphthoate 7-hydroxylase (Streptomyces carzinostaticus).